The following is a 221-amino-acid chain: Retinitis pigmentosa 9 protein (221 aa).

Composition is skewed to basic and acidic residues over residues 1-10 (MSSRPGREDV), 17-29 (RPRE…LQRR), and 60-69 (IKEDETKPED). The segment at 1–76 (MSSRPGREDV…PEDCIPDVPG (76 aa)) is disordered. A PIM1-binding region spans residues 1 to 155 (MSSRPGREDV…RDNKRHEKDV (155 aa)). Residues 104-122 (QCWRCKRYGHRTGDKECPF) form a CCHC-type zinc finger. Residue lysine 129 forms a Glycyl lysine isopeptide (Lys-Gly) (interchain with G-Cter in SUMO2) linkage. The segment covering 147-156 (DNKRHEKDVR) has biased composition (basic and acidic residues). The disordered stretch occupies residues 147–221 (DNKRHEKDVR…SKSNEGSDSE (75 aa)). The segment covering 184 to 212 (KHKKKKKKEKHKKRKKEKKKKKKRKHKSS) has biased composition (basic residues). Residues serine 212 and serine 214 each carry the phosphoserine; by PIM1 modification.

As to quaternary structure, binds to PIM1. Binds to ZNHIT4. Appears to be expressed in a wide range of tissues.

The protein resides in the nucleus. Functionally, is thought to be a target protein for the PIM1 kinase. May play some roles in B-cell proliferation in association with PIM1. The protein is Retinitis pigmentosa 9 protein (RP9) of Homo sapiens (Human).